The chain runs to 197 residues: Inner membrane protein RclC (197 aa).

Topologically, residues 1 to 15 (MEKYLHLLSRGDKIG) are periplasmic. The chain crosses the membrane as a helical span at residues 16–36 (LTLIRLSIAIVFMWIGLLKFV). Topologically, residues 37–85 (PYEADSITPFVANSPLMSFFYEHPEDYKQYLTHEGEYKPEARAWQTANN) are cytoplasmic. Residues 86-106 (TYGFSNGLGVVEVIIALLVLA) form a helical membrane-spanning segment. Residues 107–112 (NPVNRW) are Periplasmic-facing. A helical membrane pass occupies residues 113 to 133 (LGLLGGLMAFTTPLVTLSFLI). The Cytoplasmic portion of the chain corresponds to 134 to 197 (TTPEAWVPAL…ESSSTLKTEY (64 aa)).

It is found in the cell inner membrane. In terms of biological role, probably involved in reactive chlorine species (RCS) stress resistance. The polypeptide is Inner membrane protein RclC (rclC) (Escherichia coli (strain K12)).